The following is a 341-amino-acid chain: MSLSFKNIVFPEEWQVPPNDYIFIDDCYEEALQFNLFERGDEKSYTWMYHTISCCAYFWCKCSRSEMKLIGHLMLWTFLLDDILDSDKVNDAEAIEMIKRTEFIFIEGKLPENPTDLEKYTCYLRNEGLKIAGDREDMFNMFLTNSIQWILSIIPLNKSMEHKLPPHLQLHGYLRKLNVGVELCQGFTYLIFANNKVNPAIFNSPRYKKMLECTSMVVSHVNDMASYCKEVKNGGGFINSLLILQKRADPLSIEHSYQVIAEQTNAFIRDFIYQEKMLLESISDEQQNEVKVFLDHMKYLMKGNYLWSGTTARYASKSSPFVEMQKSLNVHLDNEIDASSL.

The DDxx(x)D/E motif motif lies at 81–86 (DDILDS). The short motif at 222 to 230 (NDMASYCKE) is the NDxxSxxxD/E motif element.

Belongs to the terpene synthase family.

It carries out the reaction (2E,6E)-farnesyl diphosphate = (1S,2S,4R)-beta-elemene + diphosphate. The catalysed reaction is (2E,6E)-farnesyl diphosphate = germacrene D + diphosphate. Its function is as follows. Terpene synthase that converts its substrate farnesyl diphosphate (FPP) into the sesquiterpenes beta-elemene, germacrene D and a yet unidentified sesquiterpene. The sequence is that of Terpene synthase 9 from Dictyostelium purpureum (Slime mold).